Here is a 159-residue protein sequence, read N- to C-terminus: Alpha-lactalbumin (159 aa).

An N-terminal signal peptide occupies residues 1 to 19; that stretch reads MMRFVPLFLACISLPAFQA. The 123-residue stretch at 20-142 folds into the C-type lysozyme domain; sequence TEFTKCEVSH…KLEQWRCEKP (123 aa). Intrachain disulfides connect cysteine 25/cysteine 139, cysteine 47/cysteine 130, cysteine 80/cysteine 96, and cysteine 92/cysteine 110. A glycan (N-linked (GlcNAc...) asparagine) is linked at asparagine 64. Residues lysine 98, aspartate 101, aspartate 106, and aspartate 107 each coordinate Ca(2+).

The protein belongs to the glycosyl hydrolase 22 family. Lactose synthase (LS) is a heterodimer of a catalytic component, beta1,4-galactosyltransferase (beta4Gal-T1) and a regulatory component, alpha-lactalbumin (LA). In terms of tissue distribution, mammary gland specific. Secreted in milk.

The protein localises to the secreted. Functionally, regulatory subunit of lactose synthase, changes the substrate specificity of galactosyltransferase in the mammary gland making glucose a good acceptor substrate for this enzyme. This enables LS to synthesize lactose, the major carbohydrate component of milk. In other tissues, galactosyltransferase transfers galactose onto the N-acetylglucosamine of the oligosaccharide chains in glycoproteins. In Rattus norvegicus (Rat), this protein is Alpha-lactalbumin (Lalba).